The sequence spans 96 residues: Large ribosomal subunit protein uL23 (96 aa).

It belongs to the universal ribosomal protein uL23 family. As to quaternary structure, part of the 50S ribosomal subunit. Contacts protein L29, and trigger factor when it is bound to the ribosome.

Its function is as follows. One of the early assembly proteins it binds 23S rRNA. One of the proteins that surrounds the polypeptide exit tunnel on the outside of the ribosome. Forms the main docking site for trigger factor binding to the ribosome. In Solidesulfovibrio magneticus (strain ATCC 700980 / DSM 13731 / RS-1) (Desulfovibrio magneticus), this protein is Large ribosomal subunit protein uL23.